Consider the following 264-residue polypeptide: Small ribosomal subunit protein uS2 (264 aa).

The tract at residues 228–264 (VDTSATVDEEEAEVAEETESMESAEDLDADLIEEEAE) is disordered. Over residues 234-264 (VDEEEAEVAEETESMESAEDLDADLIEEEAE) the composition is skewed to acidic residues.

This sequence belongs to the universal ribosomal protein uS2 family.

In Symbiobacterium thermophilum (strain DSM 24528 / JCM 14929 / IAM 14863 / T), this protein is Small ribosomal subunit protein uS2.